The primary structure comprises 715 residues: Protein sneaky (715 aa).

Residues methionine 1–arginine 32 lie on the Cytoplasmic side of the membrane. The chain crosses the membrane as a helical span at residues phenylalanine 33–asparagine 53. Topologically, residues phenylalanine 54–aspartate 66 are extracellular. Residues leucine 67–valine 87 form a helical membrane-spanning segment. At arginine 88–alanine 109 the chain is on the cytoplasmic side. A helical membrane pass occupies residues valine 110–valine 130. The Extracellular portion of the chain corresponds to alanine 131–lysine 373. A helical membrane pass occupies residues valine 374 to isoleucine 394. Topologically, residues asparagine 395–threonine 457 are cytoplasmic. A helical membrane pass occupies residues valine 458–isoleucine 478. The Extracellular segment spans residues aspartate 479–tyrosine 553. A helical membrane pass occupies residues tyrosine 554–leucine 574. At arginine 575–lysine 715 the chain is on the cytoplasmic side. The segment at cysteine 655–cysteine 691 adopts an RING-type; degenerate zinc-finger fold.

In terms of tissue distribution, specifically expressed in testis.

It localises to the cytoplasmic vesicle. Its subcellular location is the secretory vesicle. It is found in the acrosome membrane. The protein resides in the cytoplasm. The protein localises to the cytoplasmic vesicle membrane. Functionally, component of the sperm acrosome membrane. Required for breakdown of the sperm plasma membrane after sperm entry into the egg, which is an essential prerequisite for successful fertilization. The sequence is that of Protein sneaky from Drosophila melanogaster (Fruit fly).